Consider the following 88-residue polypeptide: Large ribosomal subunit protein bL31B (88 aa).

Belongs to the bacterial ribosomal protein bL31 family. Type B subfamily. In terms of assembly, part of the 50S ribosomal subunit.

This is Large ribosomal subunit protein bL31B from Leuconostoc citreum (strain KM20).